Here is a 481-residue protein sequence, read N- to C-terminus: MEKIIEESKQGESLVLENKPENTKKLFIESYGCAMNFSDSEVVASILSDGGYNTTSVLEEADLVLVNTCSIRDKAEQTIRKRLEKYNAVKRTNPKMKVGVLGCMAERLKSQFLEEEKIVDLVVGPDAYKDLPNLLAEVEEGRDAINVILSKEETYGDISPVRLMSNGITALVSITRGCDNMCTFCVVPFTRGRERSREPQSIMAEIQDLWSKGFKEITLLGQNVDSYLWYGGGLKKDFVNASEMQKATAVDFDQLLEMVAVGFPKMRIRFSTSNPQDMHESILHVMAKYPNICKHIHLPVQSGSNRILKEMNRLHSREEYMALIDKIRAIVPDASISQDMIAGFPTETEQDHQDTMSLMEYVKYNFGYMYSYSERPGTLAGRKMKDDVEEETKARRLQEIVDLQQKHAWFRSEEFVGKTVEVLVEKVSKKSKDEFSGRNSQSITVVFPKENYKIGDFVNVKITSCTSGTLKGEAVGLSSMN.

An MTTase N-terminal domain is found at 24-140 (KKLFIESYGC…LPNLLAEVEE (117 aa)). Residues Cys-33, Cys-69, Cys-103, Cys-178, Cys-182, and Cys-185 each contribute to the [4Fe-4S] cluster site. In terms of domain architecture, Radical SAM core spans 164–411 (MSNGITALVS…DLQQKHAWFR (248 aa)). A TRAM domain is found at 413–476 (EEFVGKTVEV…SGTLKGEAVG (64 aa)).

This sequence belongs to the methylthiotransferase family. MiaB subfamily. Monomer. [4Fe-4S] cluster serves as cofactor.

The protein resides in the cytoplasm. The enzyme catalyses N(6)-dimethylallyladenosine(37) in tRNA + (sulfur carrier)-SH + AH2 + 2 S-adenosyl-L-methionine = 2-methylsulfanyl-N(6)-dimethylallyladenosine(37) in tRNA + (sulfur carrier)-H + 5'-deoxyadenosine + L-methionine + A + S-adenosyl-L-homocysteine + 2 H(+). In terms of biological role, catalyzes the methylthiolation of N6-(dimethylallyl)adenosine (i(6)A), leading to the formation of 2-methylthio-N6-(dimethylallyl)adenosine (ms(2)i(6)A) at position 37 in tRNAs that read codons beginning with uridine. The sequence is that of tRNA-2-methylthio-N(6)-dimethylallyladenosine synthase from Flavobacterium johnsoniae (strain ATCC 17061 / DSM 2064 / JCM 8514 / BCRC 14874 / CCUG 350202 / NBRC 14942 / NCIMB 11054 / UW101) (Cytophaga johnsonae).